Consider the following 104-residue polypeptide: Integration host factor subunit beta (104 aa).

This sequence belongs to the bacterial histone-like protein family. Heterodimer of an alpha and a beta chain.

This protein is one of the two subunits of integration host factor, a specific DNA-binding protein that functions in genetic recombination as well as in transcriptional and translational control. This chain is Integration host factor subunit beta (ihfB), found in Xylella fastidiosa (strain 9a5c).